The sequence spans 234 residues: Carboxy-S-adenosyl-L-methionine synthase (234 aa).

S-adenosyl-L-methionine-binding positions include tyrosine 35, 60–62 (GCS), 83–84 (DN), 109–110 (DI), asparagine 124, and arginine 191.

The protein belongs to the class I-like SAM-binding methyltransferase superfamily. Cx-SAM synthase family. Homodimer.

The catalysed reaction is prephenate + S-adenosyl-L-methionine = carboxy-S-adenosyl-L-methionine + 3-phenylpyruvate + H2O. In terms of biological role, catalyzes the conversion of S-adenosyl-L-methionine (SAM) to carboxy-S-adenosyl-L-methionine (Cx-SAM). The chain is Carboxy-S-adenosyl-L-methionine synthase from Campylobacter concisus (strain 13826).